Consider the following 220-residue polypeptide: Cytidylate kinase (220 aa).

10-18 (GPASSGKST) serves as a coordination point for ATP.

The protein belongs to the cytidylate kinase family. Type 1 subfamily.

It is found in the cytoplasm. The enzyme catalyses CMP + ATP = CDP + ADP. It carries out the reaction dCMP + ATP = dCDP + ADP. The chain is Cytidylate kinase from Lactococcus lactis subsp. lactis (strain IL1403) (Streptococcus lactis).